The sequence spans 299 residues: Putative beta-glucosidase 2 (299 aa).

The signal sequence occupies residues 1–16 (MLHCITTIFLSISRMT). 49 to 50 (NE) contributes to the a beta-D-glucoside binding site. Catalysis depends on Glu-50, which acts as the Proton donor. Cys-69 and Cys-72 are disulfide-bonded. N-linked (GlcNAc...) asparagine glycans are attached at residues Asn-71 and Asn-76. Tyr-189 lines the a beta-D-glucoside pocket. A glycan (N-linked (GlcNAc...) asparagine) is linked at Asn-222. Glu-255 serves as a coordination point for a beta-D-glucoside. The Nucleophile role is filled by Glu-255. Residue Asn-290 is glycosylated (N-linked (GlcNAc...) asparagine).

The protein belongs to the glycosyl hydrolase 1 family.

It carries out the reaction Hydrolysis of terminal, non-reducing beta-D-glucosyl residues with release of beta-D-glucose.. The sequence is that of Putative beta-glucosidase 2 from Arabidopsis thaliana (Mouse-ear cress).